The sequence spans 532 residues: Flavin-containing monooxygenase 1 (532 aa).

The Lumenal segment spans residues 1–510; sequence MVKRVAIVGA…TRTVQETPST (510 aa). FAD contacts are provided by residues 9–13, Glu32, 40–41, and 61–62; these read GAGVS, LW, and NS. NADP(+) is bound by residues 60-61 and 195-198; these read SN and SGTD. Residues 511 to 531 traverse the membrane as a helical segment; that stretch reads FETLLKLFSFLALLVAVFFIF. Position 532 (Leu532) is a topological domain, cytoplasmic.

Belongs to the FMO family. It depends on FAD as a cofactor. In terms of tissue distribution, expressed in liver, lung and kidney and to a lesser extent in the heart and brain.

Its subcellular location is the endoplasmic reticulum membrane. It carries out the reaction hypotaurine + NADPH + O2 + H(+) = taurine + NADP(+) + H2O. The catalysed reaction is hypotaurine + NADH + O2 + H(+) = taurine + NAD(+) + H2O. It catalyses the reaction trimethylamine + NADPH + O2 = trimethylamine N-oxide + NADP(+) + H2O. The enzyme catalyses N,N-dimethylaniline + NADPH + O2 + H(+) = N,N-dimethylaniline N-oxide + NADP(+) + H2O. Functionally, broad spectrum monooxygenase that catalyzes the oxygenation of a wide variety of nitrogen- and sulfur-containing compounds including xenobiotics. Catalyzes the S-oxygenation of hypotaurine to produce taurine, an organic osmolyte involved in cell volume regulation as well as a variety of cytoprotective and developmental processes. In vitro, catalyzes the N-oxygenation of trimethylamine (TMA) to produce trimethylamine N-oxide (TMAO) and could therefore participate to the detoxification of this compound that is generated by the action of gut microbiota from dietary precursors such as choline, choline containing compounds, betaine or L-carnitine. The protein is Flavin-containing monooxygenase 1 of Rattus norvegicus (Rat).